A 264-amino-acid polypeptide reads, in one-letter code: S-adenosylmethionine decarboxylase proenzyme (264 aa).

Ser-112 acts as the Schiff-base intermediate with substrate; via pyruvic acid in catalysis. Ser-112 carries the pyruvic acid (Ser); by autocatalysis modification. The Proton acceptor; for processing activity role is filled by His-117. Catalysis depends on Cys-140, which acts as the Proton donor; for catalytic activity.

This sequence belongs to the prokaryotic AdoMetDC family. Type 2 subfamily. In terms of assembly, heterooctamer of four alpha and four beta chains arranged as a tetramer of alpha/beta heterodimers. Pyruvate is required as a cofactor. In terms of processing, is synthesized initially as an inactive proenzyme. Formation of the active enzyme involves a self-maturation process in which the active site pyruvoyl group is generated from an internal serine residue via an autocatalytic post-translational modification. Two non-identical subunits are generated from the proenzyme in this reaction, and the pyruvate is formed at the N-terminus of the alpha chain, which is derived from the carboxyl end of the proenzyme. The post-translation cleavage follows an unusual pathway, termed non-hydrolytic serinolysis, in which the side chain hydroxyl group of the serine supplies its oxygen atom to form the C-terminus of the beta chain, while the remainder of the serine residue undergoes an oxidative deamination to produce ammonia and the pyruvoyl group blocking the N-terminus of the alpha chain.

The catalysed reaction is S-adenosyl-L-methionine + H(+) = S-adenosyl 3-(methylsulfanyl)propylamine + CO2. It participates in amine and polyamine biosynthesis; S-adenosylmethioninamine biosynthesis; S-adenosylmethioninamine from S-adenosyl-L-methionine: step 1/1. Its function is as follows. Catalyzes the decarboxylation of S-adenosylmethionine to S-adenosylmethioninamine (dcAdoMet), the propylamine donor required for the synthesis of the polyamines spermine and spermidine from the diamine putrescine. The polypeptide is S-adenosylmethionine decarboxylase proenzyme (Klebsiella pneumoniae (strain 342)).